The primary structure comprises 368 residues: WAT1-related protein At5g40240 (368 aa).

Helical transmembrane passes span 18–38 (VVPF…NTLF), 50–70 (VFVF…SVIF), 82–102 (PLFF…IAGC), 111–131 (TLAS…AVIF), 142–162 (ATQA…VVVL), 194–214 (WIIG…WYIL), 226–246 (ITVV…VCLF), 260–280 (ISLA…ALTH), 292–312 (ISLF…IFLG), and 315–335 (LHLG…TVIW). EamA domains follow at residues 33–161 (GSNT…LVVV) and 208–334 (ISVW…YTVI).

Belongs to the drug/metabolite transporter (DMT) superfamily. Plant drug/metabolite exporter (P-DME) (TC 2.A.7.4) family.

It localises to the membrane. The chain is WAT1-related protein At5g40240 from Arabidopsis thaliana (Mouse-ear cress).